A 136-amino-acid polypeptide reads, in one-letter code: Beta-hordothionin (136 aa).

A signal peptide spans 1–27; sequence MGSKGLKGVMVCLLILGLVLEHVQVEG. 4 disulfides stabilise this stretch: C30–C66, C31–C58, C39–C56, and C43–C52. A propeptide spans 73-136 (acidic domain); that stretch reads LALVSNSDEP…GDVGLTSLTA (64 aa).

The protein belongs to the plant thionin (TC 1.C.44) family. 4 C-C subfamily. As to quaternary structure, homodimer.

The protein localises to the secreted. Functionally, thionins are small plant proteins which are toxic to animal cells. They seem to exert their toxic effect at the level of the cell membrane. Their precise function is not known. This is Beta-hordothionin (THI1.2) from Hordeum vulgare (Barley).